Consider the following 195-residue polypeptide: Imidazoleglycerol-phosphate dehydratase (195 aa).

It belongs to the imidazoleglycerol-phosphate dehydratase family.

It localises to the cytoplasm. It carries out the reaction D-erythro-1-(imidazol-4-yl)glycerol 3-phosphate = 3-(imidazol-4-yl)-2-oxopropyl phosphate + H2O. It participates in amino-acid biosynthesis; L-histidine biosynthesis; L-histidine from 5-phospho-alpha-D-ribose 1-diphosphate: step 6/9. The protein is Imidazoleglycerol-phosphate dehydratase of Paraburkholderia phytofirmans (strain DSM 17436 / LMG 22146 / PsJN) (Burkholderia phytofirmans).